Here is a 427-residue protein sequence, read N- to C-terminus: 3-phosphoshikimate 1-carboxyvinyltransferase (427 aa).

The 3-phosphoshikimate site is built by lysine 20, serine 21, and arginine 25. Lysine 20 is a binding site for phosphoenolpyruvate. Residues glycine 92 and arginine 120 each contribute to the phosphoenolpyruvate site. The 3-phosphoshikimate site is built by serine 166, glutamine 168, aspartate 312, and lysine 339. Glutamine 168 contributes to the phosphoenolpyruvate binding site. Aspartate 312 serves as the catalytic Proton acceptor. Positions 343 and 385 each coordinate phosphoenolpyruvate.

Belongs to the EPSP synthase family. As to quaternary structure, monomer.

It localises to the cytoplasm. It carries out the reaction 3-phosphoshikimate + phosphoenolpyruvate = 5-O-(1-carboxyvinyl)-3-phosphoshikimate + phosphate. It participates in metabolic intermediate biosynthesis; chorismate biosynthesis; chorismate from D-erythrose 4-phosphate and phosphoenolpyruvate: step 6/7. In terms of biological role, catalyzes the transfer of the enolpyruvyl moiety of phosphoenolpyruvate (PEP) to the 5-hydroxyl of shikimate-3-phosphate (S3P) to produce enolpyruvyl shikimate-3-phosphate and inorganic phosphate. The chain is 3-phosphoshikimate 1-carboxyvinyltransferase from Streptococcus thermophilus (strain CNRZ 1066).